A 641-amino-acid polypeptide reads, in one-letter code: Tetracycline resistance protein TetS (641 aa).

In terms of domain architecture, tr-type G spans 1 to 242; that stretch reads MKIINIGILA…VITSKLFSPT (242 aa). Residues 10–17, 74–78, and 128–131 each bind GTP; these read AHVDAGKT, DTPGH, and NKID.

The protein belongs to the TRAFAC class translation factor GTPase superfamily. Classic translation factor GTPase family. TetM/TetO subfamily.

Its function is as follows. Abolishes the inhibitory effect of tetracyclin on protein synthesis by a non-covalent modification of the ribosomes. This Listeria monocytogenes protein is Tetracycline resistance protein TetS (tetS).